The following is a 308-amino-acid chain: Exosporium protein A (308 aa).

It localises to the spore wall. The sequence is that of Exosporium protein A from Clostridium sporogenes (strain ATCC 15579).